A 313-amino-acid polypeptide reads, in one-letter code: Ornithine carbamoyltransferase (313 aa).

Residues 57–60 (STRT), Arg-108, and 135–138 (HPTQ) contribute to the carbamoyl phosphate site. L-ornithine is bound by residues Asn-167, Asp-231, and 235–236 (SM). Carbamoyl phosphate is bound by residues 272-273 (CL) and Arg-300.

The protein belongs to the aspartate/ornithine carbamoyltransferase superfamily. OTCase family.

The protein resides in the cytoplasm. It catalyses the reaction carbamoyl phosphate + L-ornithine = L-citrulline + phosphate + H(+). It functions in the pathway amino-acid biosynthesis; L-arginine biosynthesis; L-arginine from L-ornithine and carbamoyl phosphate: step 1/3. Reversibly catalyzes the transfer of the carbamoyl group from carbamoyl phosphate (CP) to the N(epsilon) atom of ornithine (ORN) to produce L-citrulline. In Thermotoga petrophila (strain ATCC BAA-488 / DSM 13995 / JCM 10881 / RKU-1), this protein is Ornithine carbamoyltransferase.